The following is a 91-amino-acid chain: Islet amyloid polypeptide (91 aa).

The signal sequence occupies residues Met1–Ala22. A propeptide spanning residues Thr23–Asp34 is cleaved from the precursor. Cys38 and Cys43 are joined by a disulfide. Position 73 is a tyrosine amide (Tyr73). Residues Asn77 to Leu91 constitute a propeptide that is removed on maturation.

It belongs to the calcitonin family. In terms of assembly, can form homodimers. Interacts with IDE and INS. Interaction with INS inhibits homodimerization and fibril formation.

It localises to the secreted. Its function is as follows. Amylin/IAPP is a glucoregulatory peptide hormone that plays an important role in the regulation of energy homeostasis. Selectively inhibits insulin-stimulated glucose utilization and glycogen deposition in muscle, while not affecting adipocyte glucose metabolism. IAPP function is mediated by the CALCR-RAMPs (AMYRs) receptor complexes. Amylin can also bind CALCR receptor in the absence of RAMPs, although it is more selective for AMYRs. The sequence is that of Islet amyloid polypeptide (IAPP) from Octodon degus (Degu).